We begin with the raw amino-acid sequence, 411 residues long: Serine--tRNA ligase (411 aa).

L-serine is bound at residue 226–228; that stretch reads TSE. 257–259 contacts ATP; that stretch reads RKE. L-serine is bound at residue Glu-280. 344–347 lines the ATP pocket; the sequence is EISS. Ser-379 contacts L-serine.

This sequence belongs to the class-II aminoacyl-tRNA synthetase family. Type-1 seryl-tRNA synthetase subfamily. As to quaternary structure, homodimer. The tRNA molecule binds across the dimer.

It localises to the cytoplasm. The catalysed reaction is tRNA(Ser) + L-serine + ATP = L-seryl-tRNA(Ser) + AMP + diphosphate + H(+). The enzyme catalyses tRNA(Sec) + L-serine + ATP = L-seryl-tRNA(Sec) + AMP + diphosphate + H(+). It functions in the pathway aminoacyl-tRNA biosynthesis; selenocysteinyl-tRNA(Sec) biosynthesis; L-seryl-tRNA(Sec) from L-serine and tRNA(Sec): step 1/1. Catalyzes the attachment of serine to tRNA(Ser). Is also able to aminoacylate tRNA(Sec) with serine, to form the misacylated tRNA L-seryl-tRNA(Sec), which will be further converted into selenocysteinyl-tRNA(Sec). In Campylobacter jejuni (strain RM1221), this protein is Serine--tRNA ligase.